A 98-amino-acid polypeptide reads, in one-letter code: uncharacterized protein (98 aa).

Residues 58 to 98 (ARFPVEDTAGGLLRTGGHRPQISDEEVSKRHHEQSHGQEDH) form a disordered region.

This is an uncharacterized protein from Saccharomyces cerevisiae (strain ATCC 204508 / S288c) (Baker's yeast).